The sequence spans 379 residues: Homoserine O-succinyltransferase (379 aa).

The AB hydrolase-1 domain occupies 51–360 (NAVLICHALS…DSPYGHDAFL (310 aa)). Ser-157 serves as the catalytic Nucleophile. Arg-227 contributes to the substrate binding site. Catalysis depends on residues Asp-323 and His-356. Asp-357 provides a ligand contact to substrate.

The protein belongs to the AB hydrolase superfamily. MetX family. As to quaternary structure, homodimer.

The protein resides in the cytoplasm. The enzyme catalyses L-homoserine + succinyl-CoA = O-succinyl-L-homoserine + CoA. The protein operates within amino-acid biosynthesis; L-methionine biosynthesis via de novo pathway; O-succinyl-L-homoserine from L-homoserine: step 1/1. Its function is as follows. Transfers a succinyl group from succinyl-CoA to L-homoserine, forming succinyl-L-homoserine. This is Homoserine O-succinyltransferase from Pseudomonas putida (strain GB-1).